Consider the following 480-residue polypeptide: tRNA-2-methylthio-N(6)-dimethylallyladenosine synthase (480 aa).

The 117-residue stretch at 29–145 (GSFWIQTFGC…LEALLTQVDN (117 aa)) folds into the MTTase N-terminal domain. 6 residues coordinate [4Fe-4S] cluster: Cys-38, Cys-74, Cys-108, Cys-180, Cys-184, and Cys-187. The 238-residue stretch at 166–403 (RDSTICAWVN…NALVERIALQ (238 aa)) folds into the Radical SAM core domain. Positions 406–474 (SRYSGKVEQV…AFSLSGTPCE (69 aa)) constitute a TRAM domain.

It belongs to the methylthiotransferase family. MiaB subfamily. Monomer. Requires [4Fe-4S] cluster as cofactor.

It is found in the cytoplasm. The enzyme catalyses N(6)-dimethylallyladenosine(37) in tRNA + (sulfur carrier)-SH + AH2 + 2 S-adenosyl-L-methionine = 2-methylsulfanyl-N(6)-dimethylallyladenosine(37) in tRNA + (sulfur carrier)-H + 5'-deoxyadenosine + L-methionine + A + S-adenosyl-L-homocysteine + 2 H(+). Functionally, catalyzes the methylthiolation of N6-(dimethylallyl)adenosine (i(6)A), leading to the formation of 2-methylthio-N6-(dimethylallyl)adenosine (ms(2)i(6)A) at position 37 in tRNAs that read codons beginning with uridine. The polypeptide is tRNA-2-methylthio-N(6)-dimethylallyladenosine synthase (Prochlorococcus marinus (strain MIT 9313)).